The sequence spans 249 residues: 1-(5-phosphoribosyl)-5-[(5-phosphoribosylamino)methylideneamino] imidazole-4-carboxamide isomerase (249 aa).

Asp8 (proton acceptor) is an active-site residue. Catalysis depends on Asp131, which acts as the Proton donor.

The protein belongs to the HisA/HisF family.

It is found in the cytoplasm. It carries out the reaction 1-(5-phospho-beta-D-ribosyl)-5-[(5-phospho-beta-D-ribosylamino)methylideneamino]imidazole-4-carboxamide = 5-[(5-phospho-1-deoxy-D-ribulos-1-ylimino)methylamino]-1-(5-phospho-beta-D-ribosyl)imidazole-4-carboxamide. Its pathway is amino-acid biosynthesis; L-histidine biosynthesis; L-histidine from 5-phospho-alpha-D-ribose 1-diphosphate: step 4/9. The sequence is that of 1-(5-phosphoribosyl)-5-[(5-phosphoribosylamino)methylideneamino] imidazole-4-carboxamide isomerase from Aromatoleum aromaticum (strain DSM 19018 / LMG 30748 / EbN1) (Azoarcus sp. (strain EbN1)).